Consider the following 89-residue polypeptide: Porphobilinogen deaminase (89 aa).

The protein belongs to the HMBS family. As to quaternary structure, monomer. It depends on dipyrromethane as a cofactor.

It catalyses the reaction 4 porphobilinogen + H2O = hydroxymethylbilane + 4 NH4(+). It participates in porphyrin-containing compound metabolism; protoporphyrin-IX biosynthesis; coproporphyrinogen-III from 5-aminolevulinate: step 2/4. Its function is as follows. Tetrapolymerization of the monopyrrole PBG into the hydroxymethylbilane pre-uroporphyrinogen in several discrete steps. The sequence is that of Porphobilinogen deaminase (hemC) from Dickeya chrysanthemi (Pectobacterium chrysanthemi).